A 131-amino-acid chain; its full sequence is Large ribosomal subunit protein bL17 (131 aa).

It belongs to the bacterial ribosomal protein bL17 family. As to quaternary structure, part of the 50S ribosomal subunit. Contacts protein L32.

This is Large ribosomal subunit protein bL17 from Bordetella parapertussis (strain 12822 / ATCC BAA-587 / NCTC 13253).